The sequence spans 631 residues: DNA mismatch repair protein MutL (631 aa).

It belongs to the DNA mismatch repair MutL/HexB family.

This protein is involved in the repair of mismatches in DNA. It is required for dam-dependent methyl-directed DNA mismatch repair. May act as a 'molecular matchmaker', a protein that promotes the formation of a stable complex between two or more DNA-binding proteins in an ATP-dependent manner without itself being part of a final effector complex. This chain is DNA mismatch repair protein MutL, found in Mannheimia succiniciproducens (strain KCTC 0769BP / MBEL55E).